We begin with the raw amino-acid sequence, 234 residues long: Phosphoribosylaminoimidazole-succinocarboxamide synthase (234 aa).

This sequence belongs to the SAICAR synthetase family.

It carries out the reaction 5-amino-1-(5-phospho-D-ribosyl)imidazole-4-carboxylate + L-aspartate + ATP = (2S)-2-[5-amino-1-(5-phospho-beta-D-ribosyl)imidazole-4-carboxamido]succinate + ADP + phosphate + 2 H(+). The protein operates within purine metabolism; IMP biosynthesis via de novo pathway; 5-amino-1-(5-phospho-D-ribosyl)imidazole-4-carboxamide from 5-amino-1-(5-phospho-D-ribosyl)imidazole-4-carboxylate: step 1/2. This is Phosphoribosylaminoimidazole-succinocarboxamide synthase from Streptococcus agalactiae serotype V (strain ATCC BAA-611 / 2603 V/R).